A 566-amino-acid chain; its full sequence is Lamin-1 (566 aa).

Positions 1-37 (MSSRKGTRSSRIVTLERSANSSLSNNGGGDDSFGSTL) are disordered. The residue at position 2 (S2) is an N-acetylserine. Residues 13 to 47 (VTLERSANSSLSNNGGGDDSFGSTLLETSRLQEKD) are head. One can recognise an IF rod domain in the interval 45–387 (EKDHLTSLNS…ALLEGEEERL (343 aa)). A coil 1A region spans residues 48 to 82 (HLTSLNSRLATYIDKVRQLEQENNRLQVQIRDIEV). Residues 83 to 94 (VEKKEKSNLADR) are linker 1. A coil 1B region spans residues 95–228 (FEAEKARLRR…AFALQQHKGE (134 aa)). The linker 2 stretch occupies residues 229-256 (LEEVRHKRQVDMTTYAKQINDEYQSKLQ). The tract at residues 257–385 (DQIEEMRAQF…YQALLEGEEE (129 aa)) is coil 2. The tract at residues 386 to 566 (RLNLTQEAPQ…SDPADRCSIM (181 aa)) is tail. The LTD domain occupies 435 to 550 (RRSKLNKETV…DTVSSITVEF (116 aa)). The disordered stretch occupies residues 528–566 (GDNPSARLEDSEGDTVSSITVEFSESSDPSDPADRCSIM). Residues 541-556 (DTVSSITVEFSESSDP) show a composition bias toward polar residues. C563 carries the post-translational modification Cysteine methyl ester. C563 carries the S-farnesyl cysteine lipid modification. The propeptide at 564–566 (SIM) is removed in mature form.

It belongs to the intermediate filament family. As to quaternary structure, interacts with LEM domain proteins lem-2 and emr-1. May interact with unc-84; this interaction may be required to complete the connection between the nuclear lamina and the cytoskeleton. In terms of tissue distribution, ubiquitous. Expressed in all cells, except in cells undergoing spermatogenesis.

It localises to the nucleus envelope. Its subcellular location is the nucleus inner membrane. Major component of the nuclear lamina, a fibrous layer on the nucleoplasmic side of the inner nuclear membrane. Provides a framework for the nuclear envelope and probably also interacts with chromatin. Essential to maintain the shape and integrity of the nucleus, and for DNA replication. Involved in spatial organization of nuclear pore complexes. It is not a target for ced-3 during apoptosis, suggesting that lamin cleavage is not essential for apoptosis in C.elegans. The protein is Lamin-1 of Caenorhabditis elegans.